Here is a 528-residue protein sequence, read N- to C-terminus: Phosphoenolpyruvate carboxykinase (ATP) (528 aa).

The substrate site is built by arginine 56, tyrosine 192, and lysine 198. Residues lysine 198, histidine 217, and 233 to 241 (GLSGTGKTT) contribute to the ATP site. Mn(2+) contacts are provided by lysine 198 and histidine 217. Aspartate 254 serves as a coordination point for Mn(2+). The ATP site is built by glutamate 282, arginine 319, and threonine 444. Residue arginine 319 participates in substrate binding.

Belongs to the phosphoenolpyruvate carboxykinase (ATP) family. Mn(2+) is required as a cofactor.

It localises to the cytoplasm. The enzyme catalyses oxaloacetate + ATP = phosphoenolpyruvate + ADP + CO2. The protein operates within carbohydrate biosynthesis; gluconeogenesis. Involved in the gluconeogenesis. Catalyzes the conversion of oxaloacetate (OAA) to phosphoenolpyruvate (PEP) through direct phosphoryl transfer between the nucleoside triphosphate and OAA. This is Phosphoenolpyruvate carboxykinase (ATP) from Bacillus pumilus (strain SAFR-032).